A 245-amino-acid chain; its full sequence is tRNA1(Val) (adenine(37)-N6)-methyltransferase (245 aa).

It belongs to the methyltransferase superfamily. tRNA (adenine-N(6)-)-methyltransferase family.

The protein localises to the cytoplasm. It carries out the reaction adenosine(37) in tRNA1(Val) + S-adenosyl-L-methionine = N(6)-methyladenosine(37) in tRNA1(Val) + S-adenosyl-L-homocysteine + H(+). Specifically methylates the adenine in position 37 of tRNA(1)(Val) (anticodon cmo5UAC). This is tRNA1(Val) (adenine(37)-N6)-methyltransferase from Salmonella paratyphi A (strain ATCC 9150 / SARB42).